Reading from the N-terminus, the 270-residue chain is Energy-coupling factor transporter ATP-binding protein EcfA (270 aa).

Residues 5-238 enclose the ABC transporter domain; sequence VEIENLTFFY…QLLEQNGLKA (234 aa). An ATP-binding site is contributed by 38–45; it reads GHNGAGKS.

Belongs to the ABC transporter superfamily. Energy-coupling factor EcfA family. Forms a stable energy-coupling factor (ECF) transporter complex composed of 2 membrane-embedded substrate-binding proteins (S component), 2 ATP-binding proteins (A component) and 2 transmembrane proteins (T component).

It is found in the cell membrane. Functionally, ATP-binding (A) component of a common energy-coupling factor (ECF) ABC-transporter complex. Unlike classic ABC transporters this ECF transporter provides the energy necessary to transport a number of different substrates. This is Energy-coupling factor transporter ATP-binding protein EcfA from Carboxydothermus hydrogenoformans (strain ATCC BAA-161 / DSM 6008 / Z-2901).